Consider the following 189-residue polypeptide: GMP synthase [glutamine-hydrolyzing] subunit A (189 aa).

Positions 5–189 (KILVVNNYGQ…MNFFEVCDLY (185 aa)) constitute a Glutamine amidotransferase type-1 domain. The active-site Nucleophile is the C79. Catalysis depends on residues H166 and E168.

As to quaternary structure, heterodimer composed of a glutamine amidotransferase subunit (A) and a GMP-binding subunit (B).

It catalyses the reaction XMP + L-glutamine + ATP + H2O = GMP + L-glutamate + AMP + diphosphate + 2 H(+). It participates in purine metabolism; GMP biosynthesis; GMP from XMP (L-Gln route): step 1/1. Functionally, catalyzes the synthesis of GMP from XMP. The sequence is that of GMP synthase [glutamine-hydrolyzing] subunit A from Methanosarcina mazei (strain ATCC BAA-159 / DSM 3647 / Goe1 / Go1 / JCM 11833 / OCM 88) (Methanosarcina frisia).